Consider the following 392-residue polypeptide: Homeobox protein engrailed-1 (392 aa).

Disordered stretches follow at residues 1-100 (MEEQ…AQLH), 132-164 (ARGGAGGGGRVERDRGQTAAGRDPVHPLGTRAP), 219-251 (KPSDTGGGGSGGGAGSPGAQGTKYPEHGNPAIL), and 282-306 (SDRPSSGPRTRKLKKKKNEKEDKRP). A compositionally biased stretch (low complexity) spans 14 to 36 (SALGAAAAATPGGLSLSLSPGAS). Composition is skewed to pro residues over residues 51–66 (SPQPAPPSPPAAPCLP) and 75–84 (PPHPPPPPPQ). The span at 85–100 (HLAAPAHQPQPAAQLH) shows a compositional bias: low complexity. Positions 223–236 (TGGGGSGGGAGSPG) are enriched in gly residues. The homeobox DNA-binding region spans 303 to 362 (DKRPRTAFTAEQLQRLKAEFQANRYITEQRRQTLAQELSLNESQIKIWFQNKRAKIKKAT).

It belongs to the engrailed homeobox family.

The protein localises to the nucleus. Its function is as follows. Required for proper formation of the apical ectodermal ridge and correct dorsal-ventral patterning in the limb. This chain is Homeobox protein engrailed-1 (EN1), found in Homo sapiens (Human).